A 367-amino-acid polypeptide reads, in one-letter code: DNA replication and repair protein RecF (367 aa).

30-37 (GNNAQGKT) contacts ATP.

This sequence belongs to the RecF family.

The protein localises to the cytoplasm. The RecF protein is involved in DNA metabolism; it is required for DNA replication and normal SOS inducibility. RecF binds preferentially to single-stranded, linear DNA. It also seems to bind ATP. The polypeptide is DNA replication and repair protein RecF (Clostridium tetani (strain Massachusetts / E88)).